We begin with the raw amino-acid sequence, 660 residues long: Squalene--hopene cyclase (660 aa).

One copy of the PFTB 1 repeat lies at 73 to 114; the sequence is EAKIGNYLRRVQGAHGGWPLVHDGEFDMSASVKAYFALKMIG. Asp394 serves as the catalytic Proton donor. PFTB repeat units follow at residues 419–460 and 536–586; these read IDRG…GALL and IRKA…ALMA.

The protein belongs to the terpene cyclase/mutase family.

Its subcellular location is the cell membrane. It carries out the reaction squalene = hop-22(29)-ene. It catalyses the reaction squalene + H2O = hopan-22-ol. The protein operates within secondary metabolite biosynthesis; hopanoid biosynthesis. Functionally, catalyzes the cyclization of squalene into hopene. The sequence is that of Squalene--hopene cyclase (shc) from Bradyrhizobium diazoefficiens (strain JCM 10833 / BCRC 13528 / IAM 13628 / NBRC 14792 / USDA 110).